A 334-amino-acid chain; its full sequence is Leucine carboxyl methyltransferase 1 (334 aa).

S-adenosyl-L-methionine-binding positions include lysine 37, arginine 73, glycine 98, aspartate 122, 171-172 (DL), and glutamate 198.

The protein belongs to the methyltransferase superfamily. LCMT family.

It carries out the reaction [phosphatase 2A protein]-C-terminal L-leucine + S-adenosyl-L-methionine = [phosphatase 2A protein]-C-terminal L-leucine methyl ester + S-adenosyl-L-homocysteine. Functionally, methylates the carboxyl group of the C-terminal leucine residue of protein phosphatase 2A catalytic subunits to form alpha-leucine ester residues. This Homo sapiens (Human) protein is Leucine carboxyl methyltransferase 1 (LCMT1).